The sequence spans 1032 residues: Toll-like receptor 9 (1032 aa).

A signal peptide spans 1–25; that stretch reads MGPCRGALHPLSLLVQAAALALALA. Topologically, residues 26–815 are extracellular; it reads QGTLPAFLPC…QDLRLCLDEA (790 aa). Cysteines 35 and 45 form a disulfide. 47-51 is a DNA binding site; that stretch reads WLFLK. 26 LRR repeats span residues 62 to 85, 87 to 110, 122 to 147, 150 to 166, 167 to 190, 198 to 221, 223 to 242, 243 to 268, 283 to 306, 308 to 332, 333 to 356, 363 to 386, 390 to 413, 415 to 440, 472 to 496, 498 to 521, 522 to 545, 547 to 574, 576 to 600, 602 to 624, 629 to 652, 654 to 677, 678 to 701, 703 to 725, 726 to 749, and 751 to 774; these read RGNVTSLSLYSNRIHHLHDYDFVH, VHLRRLNLKWNCPPASLSPMHFPC, VPTLEDLNLSYNSITTVPALPSSLVS, LSRTNILVLDPATLAGL, YALRFLFLDGNCYYKNPCQQALQV, LGNLTHLSLKYNNLTVVPRGLPPS, EYLLLSYNHIITLAPEDLAN, LTALRVLDVGGNCRRCDHARNPCREC, LSHLEGLVLRDSSLYSLDPRWFHG, GNLMVLDLSENFLYDCITKTKAFYG, LARLRRLNLSFNYHKKVSFAHLHL, LLSLQELDIHGIFFRSLSKTTLQS, LPMLQRLHLQLNFISQAQLSIFGA, PGLRYVDLSDNRISGAAEPAAATGEV, CRTLNFTLDLSRNNLVTVQPEMFVR, ARLQCLGLSHNSISQAVNGSQFVP, LSNLRVLDLSHNKLDLYHGRSFTE, PRLEALDLSYNSQPFSMRGVGHNLSFVA, LPALRYLSLAHNGIHSRVSQQLRSA, LRALDFSGNTLSQMWAEGDLYLR, LRSLVQLDLSQNRLHTLLPRNLDN, PKSLRLLRLRDNYLAFFNWSSLAL, LPKLEALDLAGNQLKALSNGSLPN, TQLQRLDLSGNSIGFVVPSFFAL, AVRLRELNLSANALKTVEPSWFGS, and AGALKVLDVTANPLHCACGATFVD. An N-linked (GlcNAc...) asparagine glycan is attached at N64. DNA is bound by residues 72–77 and 95–109; these read SNRIHH and KWNCPPASLSPMHFP. A disulfide bridge connects residues C98 and C110. Residue N129 is glycosylated (N-linked (GlcNAc...) asparagine). DNA-binding positions include Y132, R152, and 179–181; that span reads YYK. An intrachain disulfide couples C178 to C184. N-linked (GlcNAc...) asparagine glycosylation is present at N200. Y208 is a binding site for DNA. N-linked (GlcNAc...) asparagine glycosylation is found at N210 and N242. Intrachain disulfides connect C255-C268 and C258-C265. C258 is lipidated: S-palmitoyl cysteine. R262 lines the DNA pocket. C265 is lipidated: S-palmitoyl cysteine. N-linked (GlcNAc...) asparagine glycosylation occurs at N340. A disulfide bond links C472 and C502. Residues N476 and N515 are each glycosylated (N-linked (GlcNAc...) asparagine). N-linked (GlcNAc...) asparagine glycosylation occurs at N569. N-linked (GlcNAc...) asparagine glycosylation is found at N671, N696, and N701. A glycan (N-linked (GlcNAc...) asparagine) is linked at N733. 2 cysteine pairs are disulfide-bonded: C766-C792 and C768-C811. A helical transmembrane segment spans residues 816 to 836; the sequence is LSWVCFSLSLLAVALSLAVPM. Over 837-1032 the chain is Cytoplasmic; it reads LHQLCGWDLW…QNFCRGPTTA (196 aa). Residues 868-1013 form the TIR domain; the sequence is LAYDAFVVFD…SFWAQLGTAL (146 aa).

The protein belongs to the Toll-like receptor family. Monomer and homodimer. Exists as a monomer in the absence of unmethylated cytidine-phosphate-guanosine (CpG) ligand. Proteolytic processing of an insertion loop (Z-loop) is required for homodimerization upon binding to the unmethylated CpG ligand leading to its activation. Interacts with MYD88 via their respective TIR domains. Interacts with BTK. Interacts (via transmembrane domain) with UNC93B1. Interacts with CD300LH; the interaction may promote full activation of TLR9-triggered innate responses. Interacts with CNPY3 and HSP90B1; this interaction is required for proper folding in the endoplasmic reticulum. Interacts with SMPDL3B. Interacts with CD82; this interaction is essential for TLR9-dependent myddosome formation in response to CpG stimulation. Activated by proteolytic cleavage of the flexible loop between repeats LRR14 and LRR15 within the ectodomain. Cleavage requires UNC93B1. Proteolytically processed by first removing the majority of the ectodomain by either asparagine endopeptidase (AEP) or a cathepsin followed by a trimming event that is solely cathepsin mediated and required for optimal receptor signaling. In terms of processing, palmitoylated by ZDHHC3 in the Golgi regulates TLR9 trafficking from the Golgi to endosomes. Depalmitoylation by PPT1 controls the release of TLR9 from UNC93B1 in endosomes.

It localises to the endoplasmic reticulum membrane. The protein resides in the endosome. It is found in the lysosome. Its subcellular location is the cytoplasmic vesicle. The protein localises to the phagosome. Functionally, key component of innate and adaptive immunity. TLRs (Toll-like receptors) control host immune response against pathogens through recognition of molecular patterns specific to microorganisms. TLR9 is a nucleotide-sensing TLR which is activated by unmethylated cytidine-phosphate-guanosine (CpG) dinucleotides. Acts via MYD88 and TRAF6, leading to NF-kappa-B activation, cytokine secretion and the inflammatory response. Upon CpG stimulation, induces B-cell proliferation, activation, survival and antibody production. This chain is Toll-like receptor 9 (TLR9), found in Canis lupus familiaris (Dog).